The following is a 156-amino-acid chain: Egg-lysin (156 aa).

Residues 1–18 (MKLLVLCVFAMMATLAVS) form the signal peptide.

In terms of assembly, monomer. Homodimer. Molecules associate into dimers and then rapidly dissociate again. Interacts (as a monomer) with the egg vitelline layer protein VERL (via VERL repeats); each VERL chain can bind multiple copies of lysin. In terms of tissue distribution, sperm.

The protein resides in the cytoplasmic vesicle. It is found in the secretory vesicle. The protein localises to the acrosome lumen. Its function is as follows. Creates a 3 um hole in the egg vitelline layer through which the sperm passes. Does not have enzyme activity. Species-specific interaction between the sperm protein lysin and the egg protein VERL exposes a basic surface on lysin that may dissociate the egg vitelline layer via electrostatic repulsion. Plays a role in ensuring species-specific fertilization. The polypeptide is Egg-lysin (Haliotis cracherodii (Black abalone)).